The following is an 87-amino-acid chain: Putative regulatory protein syc0519_c (87 aa).

Belongs to the RemA family.

This Synechococcus sp. (strain ATCC 27144 / PCC 6301 / SAUG 1402/1) (Anacystis nidulans) protein is Putative regulatory protein syc0519_c.